The primary structure comprises 89 residues: Small ribosomal subunit protein bS20 (89 aa).

The segment covering 1–12 (MANIKSAKKRVK) has biased composition (basic residues). The segment at 1-20 (MANIKSAKKRVKQTVVRNER) is disordered.

It belongs to the bacterial ribosomal protein bS20 family.

Functionally, binds directly to 16S ribosomal RNA. The protein is Small ribosomal subunit protein bS20 of Xylella fastidiosa (strain 9a5c).